The chain runs to 473 residues: 3-isopropylmalate dehydratase large subunit (473 aa).

[4Fe-4S] cluster-binding residues include Cys-351, Cys-414, and Cys-417.

It belongs to the aconitase/IPM isomerase family. LeuC type 1 subfamily. Heterodimer of LeuC and LeuD. [4Fe-4S] cluster is required as a cofactor.

The catalysed reaction is (2R,3S)-3-isopropylmalate = (2S)-2-isopropylmalate. It participates in amino-acid biosynthesis; L-leucine biosynthesis; L-leucine from 3-methyl-2-oxobutanoate: step 2/4. Its function is as follows. Catalyzes the isomerization between 2-isopropylmalate and 3-isopropylmalate, via the formation of 2-isopropylmaleate. The polypeptide is 3-isopropylmalate dehydratase large subunit (Acidovorax ebreus (strain TPSY) (Diaphorobacter sp. (strain TPSY))).